The primary structure comprises 284 residues: 2-dehydro-3-deoxyphosphooctonate aldolase (284 aa).

The protein belongs to the KdsA family.

The protein resides in the cytoplasm. It carries out the reaction D-arabinose 5-phosphate + phosphoenolpyruvate + H2O = 3-deoxy-alpha-D-manno-2-octulosonate-8-phosphate + phosphate. Its pathway is carbohydrate biosynthesis; 3-deoxy-D-manno-octulosonate biosynthesis; 3-deoxy-D-manno-octulosonate from D-ribulose 5-phosphate: step 2/3. It participates in bacterial outer membrane biogenesis; lipopolysaccharide biosynthesis. This Escherichia coli O6:H1 (strain CFT073 / ATCC 700928 / UPEC) protein is 2-dehydro-3-deoxyphosphooctonate aldolase.